The following is a 218-amino-acid chain: Cytochrome c biogenesis ATP-binding export protein CcmA (218 aa).

The ABC transporter domain occupies 12–217 (LHAEQLSSIR…KLSLEYRGEV (206 aa)). ATP is bound at residue 44-51 (GPNGAGKS).

Belongs to the ABC transporter superfamily. CcmA exporter (TC 3.A.1.107) family. In terms of assembly, the complex is composed of two ATP-binding proteins (CcmA) and two transmembrane proteins (CcmB).

Its subcellular location is the cell inner membrane. It catalyses the reaction heme b(in) + ATP + H2O = heme b(out) + ADP + phosphate + H(+). Its function is as follows. Part of the ABC transporter complex CcmAB involved in the biogenesis of c-type cytochromes; once thought to export heme, this seems not to be the case, but its exact role is uncertain. Responsible for energy coupling to the transport system. This Idiomarina loihiensis (strain ATCC BAA-735 / DSM 15497 / L2-TR) protein is Cytochrome c biogenesis ATP-binding export protein CcmA.